Here is a 236-residue protein sequence, read N- to C-terminus: NAD(P)H-hydrate epimerase (236 aa).

Residues 11–217 (AAALDRELMS…SIAKKYDFDV (207 aa)) form the YjeF N-terminal domain. 61–65 (NNGGD) contributes to the (6S)-NADPHX binding site. Residues Asn62 and Asp123 each coordinate K(+). Residues 127 to 133 (GFSFSGE) and Asp156 each bind (6S)-NADPHX. Ser159 is a K(+) binding site.

The protein belongs to the NnrE/AIBP family. It depends on K(+) as a cofactor.

The protein resides in the cytoplasm. The protein localises to the mitochondrion. It catalyses the reaction (6R)-NADHX = (6S)-NADHX. The catalysed reaction is (6R)-NADPHX = (6S)-NADPHX. Catalyzes the epimerization of the S- and R-forms of NAD(P)HX, a damaged form of NAD(P)H that is a result of enzymatic or heat-dependent hydration. This is a prerequisite for the S-specific NAD(P)H-hydrate dehydratase to allow the repair of both epimers of NAD(P)HX. This Neurospora crassa (strain ATCC 24698 / 74-OR23-1A / CBS 708.71 / DSM 1257 / FGSC 987) protein is NAD(P)H-hydrate epimerase.